Here is a 394-residue protein sequence, read N- to C-terminus: Chalcone synthase (394 aa).

C168 is an active-site residue.

It belongs to the thiolase-like superfamily. Chalcone/stilbene synthases family.

It catalyses the reaction (E)-4-coumaroyl-CoA + 3 malonyl-CoA + 3 H(+) = 2',4,4',6'-tetrahydroxychalcone + 3 CO2 + 4 CoA. The protein operates within secondary metabolite biosynthesis; flavonoid biosynthesis. Its function is as follows. The primary product of this enzyme is 4,2',4',6'-tetrahydroxychalcone (also termed naringenin-chalcone or chalcone) which can under specific conditions spontaneously isomerize into naringenin. The sequence is that of Chalcone synthase (CHS) from Raphanus sativus (Radish).